Here is a 265-residue protein sequence, read N- to C-terminus: Neuronal membrane glycoprotein M6-b (265 aa).

A helical transmembrane segment spans residues 31–51 (GGVPYASLVATILCFSGVALF). A glycan (N-linked (GlcNAc...) asparagine) is linked at Asn-73. A run of 2 helical transmembrane segments spans residues 90–110 (VIYG…AEGF) and 136–156 (FVFL…FSAV). A glycan (N-linked (GlcNAc...) asparagine) is linked at Asn-177. A helical transmembrane segment spans residues 224–244 (LFIVACAGAGATVIALLIYMM). Ser-257 bears the Phosphoserine mark.

The protein belongs to the myelin proteolipid protein family. In terms of assembly, interacts with SERT. In terms of tissue distribution, highly expressed in the ventral medullary surface, moderately in the cerebral cortex and cerebellum, poorly in lung and kidney, and not at all in heart, skeletal muscle, liver, stomach or stomach.

Its subcellular location is the membrane. The protein resides in the cell membrane. In terms of biological role, may be involved in neural development. Involved in regulation of osteoblast function and bone formation. Involved in matrix vesicle release by osteoblasts; this function seems to involve maintenance of the actin cytoskeleton. May be involved in cellular trafficking of SERT and thereby in regulation of serotonin uptake. In Rattus norvegicus (Rat), this protein is Neuronal membrane glycoprotein M6-b (Gpm6b).